The sequence spans 209 residues: Ribosomal RNA small subunit methyltransferase G (209 aa).

S-adenosyl-L-methionine is bound by residues Gly77, Met82, 128–129, and Arg143; that span reads VE.

This sequence belongs to the methyltransferase superfamily. RNA methyltransferase RsmG family.

The protein resides in the cytoplasm. The enzyme catalyses guanosine(527) in 16S rRNA + S-adenosyl-L-methionine = N(7)-methylguanosine(527) in 16S rRNA + S-adenosyl-L-homocysteine. In terms of biological role, specifically methylates the N7 position of guanine in position 527 of 16S rRNA. This Chromobacterium violaceum (strain ATCC 12472 / DSM 30191 / JCM 1249 / CCUG 213 / NBRC 12614 / NCIMB 9131 / NCTC 9757 / MK) protein is Ribosomal RNA small subunit methyltransferase G.